The chain runs to 282 residues: Pantothenate synthetase (282 aa).

30-37 lines the ATP pocket; that stretch reads MGYLHEGH. Catalysis depends on H37, which acts as the Proton donor. Position 61 (Q61) interacts with (R)-pantoate. Position 61 (Q61) interacts with beta-alanine. 147–150 contributes to the ATP binding site; it reads GMKD. Q153 lines the (R)-pantoate pocket. Residues V176 and 184 to 187 contribute to the ATP site; that span reads KSSR.

This sequence belongs to the pantothenate synthetase family. In terms of assembly, homodimer.

The protein localises to the cytoplasm. It carries out the reaction (R)-pantoate + beta-alanine + ATP = (R)-pantothenate + AMP + diphosphate + H(+). It functions in the pathway cofactor biosynthesis; (R)-pantothenate biosynthesis; (R)-pantothenate from (R)-pantoate and beta-alanine: step 1/1. Its function is as follows. Catalyzes the condensation of pantoate with beta-alanine in an ATP-dependent reaction via a pantoyl-adenylate intermediate. The polypeptide is Pantothenate synthetase (Bacillus cereus (strain ATCC 14579 / DSM 31 / CCUG 7414 / JCM 2152 / NBRC 15305 / NCIMB 9373 / NCTC 2599 / NRRL B-3711)).